A 209-amino-acid polypeptide reads, in one-letter code: Large ribosomal subunit protein uL4 (209 aa).

The tract at residues 46-71 is disordered; it reads GTSSTKTRSEVRGSSKKPWKQKGTGR. Residues 59 to 71 show a composition bias toward basic residues; sequence SSKKPWKQKGTGR.

This sequence belongs to the universal ribosomal protein uL4 family. Part of the 50S ribosomal subunit.

In terms of biological role, one of the primary rRNA binding proteins, this protein initially binds near the 5'-end of the 23S rRNA. It is important during the early stages of 50S assembly. It makes multiple contacts with different domains of the 23S rRNA in the assembled 50S subunit and ribosome. Forms part of the polypeptide exit tunnel. The chain is Large ribosomal subunit protein uL4 from Borrelia garinii subsp. bavariensis (strain ATCC BAA-2496 / DSM 23469 / PBi) (Borreliella bavariensis).